The primary structure comprises 930 residues: Polypeptide N-acetylgalactosaminyltransferase 5 (930 aa).

At 1 to 12 the chain is on the cytoplasmic side; the sequence is MNKIRKFFRGSG. Residues 13-35 form a helical; Signal-anchor for type II membrane protein membrane-spanning segment; that stretch reads RVLAFIFAASVIWLLFDMAALRL. Over 36 to 930 the chain is Lumenal; that stretch reads SFSEINAGLL…KWKFEKYYEV (895 aa). Residues 190–209 form a disordered region; it reads KQEAPQNYNVSSDTSKQASE. Over residues 193–209 the composition is skewed to polar residues; sequence APQNYNVSSDTSKQASE. N-linked (GlcNAc...) asparagine glycosylation is found at N198, N213, and N283. Phosphoserine is present on S285. N-linked (GlcNAc...) asparagine glycosylation is found at N287, N309, N355, and N387. The disordered stretch occupies residues 327 to 381; that stretch reads DTKEVPNSKTQTVFPKLLGGSPHKQIPRNQSKTSSSPPALKKAVSQSKPTISGGL. Residues 353–363 show a composition bias toward polar residues; the sequence is PRNQSKTSSSP. 3 disulfide bridges follow: C476–C708, C699–C779, and C812–C825. A catalytic subdomain A region spans residues 485–594; it reads LPTTSIIMCF…VGWLEPLLER (110 aa). Residues D526 and R555 each contribute to the substrate site. A glycan (N-linked (GlcNAc...) asparagine) is linked at N568. Residue D578 coordinates Mn(2+). S579 provides a ligand contact to substrate. Residue H580 participates in Mn(2+) binding. The segment at 654 to 716 is catalytic subdomain B; sequence IIRCPVMAGG…PCSRVGHIFR (63 aa). Residue W685 coordinates substrate. H713 provides a ligand contact to Mn(2+). Substrate is bound by residues R716 and Y721. N-linked (GlcNAc...) asparagine glycans are attached at residues N766, N817, and N835. The 132-residue stretch at 794–925 folds into the Ricin B-type lectin domain; it reads KAPVVRASGV…MELQQKWKFE (132 aa). Cystine bridges form between C848-C863 and C898-C913. A glycan (N-linked (GlcNAc...) asparagine) is linked at N902.

It belongs to the glycosyltransferase 2 family. GalNAc-T subfamily. Interacts with EXT2. Does not interact with EXT1, EXTL1 or EXTL3. The cofactor is Mn(2+). In terms of tissue distribution, expressed at low level. Not expressed before E7.5 during embryogenesis. Expressed in dental mesenchyme and tongue. Accumulates in a subset of mesenchymal cells at the ventral-most portions of the 12.5 dpc maxilla and mandible underlying the dental lamina.

The protein localises to the golgi apparatus membrane. The catalysed reaction is L-seryl-[protein] + UDP-N-acetyl-alpha-D-galactosamine = a 3-O-[N-acetyl-alpha-D-galactosaminyl]-L-seryl-[protein] + UDP + H(+). It catalyses the reaction L-threonyl-[protein] + UDP-N-acetyl-alpha-D-galactosamine = a 3-O-[N-acetyl-alpha-D-galactosaminyl]-L-threonyl-[protein] + UDP + H(+). It participates in protein modification; protein glycosylation. Functionally, catalyzes the initial reaction in O-linked oligosaccharide biosynthesis, the transfer of an N-acetyl-D-galactosamine residue to a serine or threonine residue on the protein receptor. Has activity toward EA2 peptide substrate, but has a weak activity toward Muc2 or Muc1b substrates. The polypeptide is Polypeptide N-acetylgalactosaminyltransferase 5 (Galnt5) (Mus musculus (Mouse)).